Reading from the N-terminus, the 452-residue chain is Plasminogen-binding protein PgbA (452 aa).

The interval 265 to 452 (QEAIKEPKKA…RRKALEAGKK (188 aa)) is disordered. 2 stretches are compositionally biased toward basic and acidic residues: residues 284 to 310 (LEEK…DERK) and 317 to 373 (KAME…KEPS). Over residues 374-391 (DGNNATQQGEKQNAPKEN) the composition is skewed to polar residues. The span at 392–452 (NAQKEENKPN…RRKALEAGKK (61 aa)) shows a compositional bias: basic and acidic residues.

The protein localises to the cell surface. In terms of biological role, binds plasminogen, specifically, and in a concentration and lysine-dependent manner. Plasminogen is the precursor of plasmin, a serine protease that cleaves fibrin, fibronectin, laminin and vitronectin. Acquisition of plasminogen/plasmin could enable H.pylori to degrade host components. This is Plasminogen-binding protein PgbA (pgbA) from Helicobacter pylori (strain ATCC 700392 / 26695) (Campylobacter pylori).